The following is a 208-amino-acid chain: Tektin bundle-interacting protein 1 (208 aa).

In terms of assembly, microtubule inner protein component of sperm flagellar doublet microtubules. In terms of tissue distribution, expressed in trachea multiciliated cells.

It localises to the cytoplasm. The protein localises to the cytoskeleton. It is found in the cilium axoneme. Its subcellular location is the flagellum axoneme. Functionally, microtubule inner protein (MIP) part of the dynein-decorated doublet microtubules (DMTs) in cilia axoneme, which is required for motile cilia beating. Located at the center of the tektin bundle where may function to recruit tektins or stabilize the bundle. The protein is Tektin bundle-interacting protein 1 (TEKTIP1) of Bos taurus (Bovine).